We begin with the raw amino-acid sequence, 311 residues long: Putative tenascin-XA (311 aa).

2 disordered regions span residues 1-47 and 124-150; these read MEDK…EPRL and LSAE…SQLS. 3 Fibronectin type-III domains span residues 41-135, 145-249, and 250-311; these read PPEE…LAPA, RLSQ…SPRD, and LQFS…SCVH.

Expressed in the adrenal gland.

The sequence is that of Putative tenascin-XA (TNXA) from Homo sapiens (Human).